The sequence spans 184 residues: ATP-dependent protease subunit HslV (184 aa).

Thr-12 is an active-site residue. Na(+) is bound by residues Ala-166, Cys-169, and Thr-172.

It belongs to the peptidase T1B family. HslV subfamily. As to quaternary structure, a double ring-shaped homohexamer of HslV is capped on each side by a ring-shaped HslU homohexamer. The assembly of the HslU/HslV complex is dependent on binding of ATP.

The protein localises to the cytoplasm. It carries out the reaction ATP-dependent cleavage of peptide bonds with broad specificity.. Allosterically activated by HslU binding. Functionally, protease subunit of a proteasome-like degradation complex believed to be a general protein degrading machinery. This chain is ATP-dependent protease subunit HslV, found in Brucella abortus (strain S19).